We begin with the raw amino-acid sequence, 353 residues long: MEVRNMVDYELLKKVVEAPGVSGYEFLGIRDVVIEEIKDYVDEVKVDKLGNVIAHKKGEGPKVMIAAHMDQIGLMVTHIEKNGFLRVAPIGGVDPKTLIAQRFKVWIDKGKFIYGVGASVPPHIQKPEDRKKAPDWDQIFIDIGAESKEEAEDMGVKIGTVITWDGRLERLGKHRFVSIAFDDRIAVYTILEVAKQLKDAKADVYFVATVQEEVGLRGARTSAFGIEPDYGFAIDVTIAADIPGTPEHKQVTHLGKGTAIKIMDRSVICHPTIVRWLEELAKKHEIPYQLEILLGGGTDAGAIHLTKAGVPTGALSVPARYIHSNTEVVDERDVDATVELMTKALENIHELKI.

H68 and D182 together coordinate Zn(2+). The active-site Proton acceptor is E212. The Zn(2+) site is built by E213, D235, and H323.

It belongs to the peptidase M42 family. In terms of assembly, homododecamer. The assembly of six dimers results in a tetrahedral-shaped structure; all 12 active sites are located on the inside of the tetrahedron. Substrate access is granted by four pores with a maximal diameter of 18 Angstroms, allowing only small peptides and unfolded proteins access to the active site. Beside the four entry ports, TET contains 12 small product release openings, which are large enough to allow passage of only single amino acid residues. Requires Zn(2+) as cofactor. Co(2+) is required as a cofactor.

Its activity is regulated as follows. Inhibited by EDTA and bestatin in vitro. Is insensitive to papain, antipain, chymostatin, leupeptin, pepstatin and aprotinin. Functionally, functions as an aminopeptidase, with a clear preference for leucine as the N-terminal amino acid. However, can also cleave moderately long polypeptide substrates of various compositions in a fairly unspecific manner. Has neither carboxypeptidase nor endoproteolytic activities, and it is devoid of N-terminal deblocking activity. Is involved in protein degradation, performing degradation of oligopeptides produced by the proteasome into single amino acids. This Pyrococcus horikoshii (strain ATCC 700860 / DSM 12428 / JCM 9974 / NBRC 100139 / OT-3) protein is Tetrahedral aminopeptidase (frvX).